Here is a 473-residue protein sequence, read N- to C-terminus: MRAGLGPIITLALVLEVAWASELKPTAPPIFTGRPFVVAWNVPTQECAPRHKVPLDLRAFDVEATPNEGFFNQNITTFYYDRLGLYPRFDAAGMSVHGGVPQNGSLCAHLPMLKEAVERYIQTQEPAGLAVIDWEEWRPVWVRNWQEKDVYRQSSRQLVASRHPDWPSDRIVKQAQYEFEFAARQFMLNTLRYVKAVRPQHLWGFYLFPDCYNHDYVQNWDSYTGRCPDVEVAQNDQLAWLWAENTALFPSVYLDKTLASSKHSRNFVSFRVQEALRVAHTHHANHALPVYVFTRPTYTRRLTELNQMDLISTIGESAALGSAGVIFWGDSVYASSMENCQNLKKYLTQTLVPYIVNVSWATQYCSWTQCHGHGRCVRRNPSASTFLHLSPSSFRLVPGRTPSEPQLRPEGELSEDDLSYLQMHFRCHCYLGWGGEQCQWNHKRAAGDASRAWAGAHLASLLGLVAMTLTWTL.

The first 20 residues, 1–20 (MRAGLGPIITLALVLEVAWA), serve as a signal peptide directing secretion. Cystine bridges form between cysteine 47–cysteine 340 and cysteine 211–cysteine 227. 2 N-linked (GlcNAc...) asparagine glycosylation sites follow: asparagine 74 and asparagine 103. Glutamate 135 functions as the Proton donor in the catalytic mechanism. An N-linked (GlcNAc...) asparagine glycan is attached at asparagine 357. Residues 361-439 (ATQYCSWTQC…YLGWGGEQCQ (79 aa)) form the EGF-like domain. Cystine bridges form between cysteine 365–cysteine 376, cysteine 370–cysteine 427, and cysteine 429–cysteine 438. Aspartate 448 carries the GPI-anchor amidated aspartate lipid modification. Positions 449-473 (ASRAWAGAHLASLLGLVAMTLTWTL) are cleaved as a propeptide — removed in mature form.

The protein belongs to the glycosyl hydrolase 56 family. Interacts with MST1R.

It is found in the cell membrane. The catalysed reaction is Random hydrolysis of (1-&gt;4)-linkages between N-acetyl-beta-D-glucosamine and D-glucuronate residues in hyaluronate.. In terms of biological role, catalyzes hyaluronan degradation into small fragments that are endocytosed and degraded in lysosomes by HYAL1 and exoglycosidases. Essential for the breakdown of extracellular matrix hyaluronan. The protein is Hyaluronidase-2 (Hyal2) of Rattus norvegicus (Rat).